Consider the following 252-residue polypeptide: Phosphate import ATP-binding protein PstB 1 (252 aa).

The ABC transporter domain occupies 6-247 (LQIRDLSVYY…PKRKETEDYI (242 aa)). An ATP-binding site is contributed by 38-45 (GPSGSGKS).

This sequence belongs to the ABC transporter superfamily. Phosphate importer (TC 3.A.1.7) family. In terms of assembly, the complex is composed of two ATP-binding proteins (PstB), two transmembrane proteins (PstC and PstA) and a solute-binding protein (PstS).

It is found in the cell membrane. The catalysed reaction is phosphate(out) + ATP + H2O = ADP + 2 phosphate(in) + H(+). Its function is as follows. Part of the ABC transporter complex PstSACB involved in phosphate import. Responsible for energy coupling to the transport system. In Streptococcus pyogenes serotype M6 (strain ATCC BAA-946 / MGAS10394), this protein is Phosphate import ATP-binding protein PstB 1.